A 224-amino-acid chain; its full sequence is Cytidylate kinase (224 aa).

ATP is bound at residue 11 to 19 (GPAAAGKST).

Belongs to the cytidylate kinase family. Type 1 subfamily.

The protein resides in the cytoplasm. The enzyme catalyses CMP + ATP = CDP + ADP. It carries out the reaction dCMP + ATP = dCDP + ADP. The polypeptide is Cytidylate kinase (Geobacillus thermodenitrificans (strain NG80-2)).